Reading from the N-terminus, the 261-residue chain is Ethanolamine ammonia-lyase small subunit (261 aa).

Adenosylcob(III)alamin contacts are provided by valine 157, glutamate 178, and cysteine 207.

This sequence belongs to the EutC family. In terms of assembly, the basic unit is a heterodimer which dimerizes to form tetramers. The heterotetramers trimerize; 6 large subunits form a core ring with 6 small subunits projecting outwards. Adenosylcob(III)alamin is required as a cofactor.

It is found in the bacterial microcompartment. It catalyses the reaction ethanolamine = acetaldehyde + NH4(+). The protein operates within amine and polyamine degradation; ethanolamine degradation. In terms of biological role, catalyzes the deamination of various vicinal amino-alcohols to oxo compounds. Allows this organism to utilize ethanolamine as the sole source of nitrogen and carbon in the presence of external vitamin B12. The chain is Ethanolamine ammonia-lyase small subunit from Rhodopseudomonas palustris (strain BisA53).